Consider the following 523-residue polypeptide: Sialate O-acetylesterase (523 aa).

The first 23 residues, 1 to 23 (MVAPGLVLGLVLPLILWADRSAG), serve as a signal peptide directing secretion. N-linked (GlcNAc...) asparagine glycosylation is found at Asn-107, Asn-138, Asn-267, Asn-290, Asn-401, and Asn-422.

In terms of tissue distribution, widely expressed with high expression in the testis, prostate, and colon.

Its subcellular location is the lysosome. It is found in the cytoplasm. It carries out the reaction N-acetyl-9-O-acetylneuraminate + H2O = N-acetylneuraminate + acetate + H(+). The enzyme catalyses an Ac-O-9-sialoglycoconjugate + H2O = a sialoglycoconjugate + acetate + H(+). In terms of biological role, catalyzes the removal of O-acetyl ester groups from position 9 of the free diacetylated sialate N-acetyl-9-O-acetylneuraminate (Neu5,9Ac2) in the cytosol and of the diacetylated sialate residues of sialylglycoconjugates in the lysosomes. Together with the sialate-O-acetyltransferase they regulate the balance of acetylated sialoglycoconjugates, key players in various processes such as cell-cell interactions, host-pathogen recognition, and tumor antigenicity. In Homo sapiens (Human), this protein is Sialate O-acetylesterase (SIAE).